Reading from the N-terminus, the 88-residue chain is Sec-independent protein translocase protein TatA (88 aa).

The chain crosses the membrane as a helical span at residues 1 to 21; sequence MGGIGIWQLAIITVIVILLFG. The disordered stretch occupies residues 46–88; that stretch reads DNDKDSTQVDDKDSTQVDDNAKQPSNKKVEENIKEQSKEKDRA.

This sequence belongs to the TatA/E family. In terms of assembly, the Tat system comprises two distinct complexes: a TatABC complex, containing multiple copies of TatA, TatB and TatC subunits, and a separate TatA complex, containing only TatA subunits. Substrates initially bind to the TatABC complex, which probably triggers association of the separate TatA complex to form the active translocon.

The protein resides in the cell inner membrane. In terms of biological role, part of the twin-arginine translocation (Tat) system that transports large folded proteins containing a characteristic twin-arginine motif in their signal peptide across membranes. TatA could form the protein-conducting channel of the Tat system. This is Sec-independent protein translocase protein TatA from Psychromonas ingrahamii (strain DSM 17664 / CCUG 51855 / 37).